Consider the following 280-residue polypeptide: MSQFIRHYLLSLQFFTRIPVTGRLANWVGFSPAMLRASAGHFPGVGVLVGALVAAFTALLLFVLPRTGSTPLVAAALGTALGVLLTGAFHEDGLADVFDGLGGSAERERALVIMKDSRVGAFGAIAVMLALLCKVALLALLGAVSATLMVAALFVAHVLSRTWPLLTIRLLPHVGDAAGSKSKPLADQISVAALLTGFIWCFMALALVISTQSATEYIAINLTDTALLQALLSAVVASCVAWAVMARWFWRRLQGFTGDCLGATQQVCELAFYLGLAVGL.

Helical transmembrane passes span G44–L64, S69–F89, L111–L131, V135–V155, I189–I209, and A226–A246.

The protein belongs to the CobS family. Mg(2+) is required as a cofactor.

It localises to the cell inner membrane. The enzyme catalyses alpha-ribazole + adenosylcob(III)inamide-GDP = adenosylcob(III)alamin + GMP + H(+). It carries out the reaction alpha-ribazole 5'-phosphate + adenosylcob(III)inamide-GDP = adenosylcob(III)alamin 5'-phosphate + GMP + H(+). The protein operates within cofactor biosynthesis; adenosylcobalamin biosynthesis; adenosylcobalamin from cob(II)yrinate a,c-diamide: step 7/7. Its function is as follows. Joins adenosylcobinamide-GDP and alpha-ribazole to generate adenosylcobalamin (Ado-cobalamin). Also synthesizes adenosylcobalamin 5'-phosphate from adenosylcobinamide-GDP and alpha-ribazole 5'-phosphate. The sequence is that of Adenosylcobinamide-GDP ribazoletransferase from Albidiferax ferrireducens (strain ATCC BAA-621 / DSM 15236 / T118) (Rhodoferax ferrireducens).